Reading from the N-terminus, the 197-residue chain is Adenylate kinase 1 (197 aa).

Residue 19–24 coordinates ATP; it reads GSGKGT. Residues 39–68 form an NMP region; that stretch reads SSGDLLRAEVQSGSPKGKELKAMMERGELV. Residues S40, R45, 95–98, and Q102 each bind AMP; that span reads GYPR. Positions 132–142 are LID; sequence KRAETSNRVDD. R133 lines the ATP pocket. Residues R139 and R150 each contribute to the AMP site. G178 is an ATP binding site.

It belongs to the adenylate kinase family. AK1 subfamily. As to quaternary structure, monomer. It depends on Mg(2+) as a cofactor.

The protein localises to the cytoplasm. It catalyses the reaction AMP + ATP = 2 ADP. It participates in purine metabolism; purine nucleotide biosynthesis. Its function is as follows. Catalyzes the reversible transfer of the terminal phosphate group between ATP and AMP. Plays an important role in cellular energy homeostasis and in adenine nucleotide metabolism. In Schistosoma mansoni (Blood fluke), this protein is Adenylate kinase 1.